Consider the following 121-residue polypeptide: Histone H2B.6 (121 aa).

The tract at residues Met-1–Lys-28 is disordered. N6-acetyllysine occurs at positions 7 and 13.

Belongs to the histone H2B family. In terms of assembly, the nucleosome is a histone octamer containing two molecules each of H2A, H2B, H3 and H4 assembled in one H3-H4 heterotetramer and two H2A-H2B heterodimers. The octamer wraps approximately 147 bp of DNA. In terms of processing, can be acetylated to form H2BK6ac and H2BK33ac. As to expression, expressed preferentially in meristematic tissues.

The protein resides in the nucleus. It is found in the chromosome. In terms of biological role, core component of nucleosome. Nucleosomes wrap and compact DNA into chromatin, limiting DNA accessibility to the cellular machineries which require DNA as a template. Histones thereby play a central role in transcription regulation, DNA repair, DNA replication and chromosomal stability. DNA accessibility is regulated via a complex set of post-translational modifications of histones, also called histone code, and nucleosome remodeling. The chain is Histone H2B.6 (TH123) from Triticum aestivum (Wheat).